The chain runs to 687 residues: uncharacterized protein (687 aa).

A run of 14 helical transmembrane segments spans residues 28 to 48, 66 to 86, 94 to 114, 126 to 146, 154 to 174, 182 to 202, 211 to 231, 243 to 263, 287 to 307, 320 to 340, 348 to 368, 378 to 398, 414 to 434, and 480 to 500; these read IIFT…TIVV, WAVT…GKLG, VLLG…LSQT, GVGA…VVPL, GVLG…GGWL, WAFW…ATAV, PVID…LIMA, SATI…FVWL, VLSF…PIYL, LRTL…GVLV, IFPV…SQMD, LYLV…VLIV, VTFF…ALFV, and LTQV…LALL.

This sequence belongs to the major facilitator superfamily. TCR/Tet family.

Its subcellular location is the cell membrane. This is an uncharacterized protein from Mycobacterium tuberculosis (strain CDC 1551 / Oshkosh).